We begin with the raw amino-acid sequence, 348 residues long: Phospho-2-dehydro-3-deoxyheptonate aldolase, Trp-sensitive (348 aa).

This sequence belongs to the class-I DAHP synthase family.

The catalysed reaction is D-erythrose 4-phosphate + phosphoenolpyruvate + H2O = 7-phospho-2-dehydro-3-deoxy-D-arabino-heptonate + phosphate. Its pathway is metabolic intermediate biosynthesis; chorismate biosynthesis; chorismate from D-erythrose 4-phosphate and phosphoenolpyruvate: step 1/7. Stereospecific condensation of phosphoenolpyruvate (PEP) and D-erythrose-4-phosphate (E4P) giving rise to 3-deoxy-D-arabino-heptulosonate-7-phosphate (DAHP). This Buchnera aphidicola subsp. Schizaphis graminum (strain Sg) protein is Phospho-2-dehydro-3-deoxyheptonate aldolase, Trp-sensitive (aroH).